Here is a 181-residue protein sequence, read N- to C-terminus: Isopentenyl-diphosphate Delta-isomerase (181 aa).

Mn(2+) is bound by residues H29 and H36. The Nudix hydrolase domain maps to 34–167 (PLHLAFSCYL…GWAISPWAAE (134 aa)). C71 is a catalytic residue. Residue H73 coordinates Mn(2+). Residue E91 participates in Mg(2+) binding. Residues E118 and E120 each contribute to the Mn(2+) site. The active site involves E120.

It belongs to the IPP isomerase type 1 family. Requires Mg(2+) as cofactor. Mn(2+) is required as a cofactor.

The protein localises to the cytoplasm. It catalyses the reaction isopentenyl diphosphate = dimethylallyl diphosphate. It participates in isoprenoid biosynthesis; dimethylallyl diphosphate biosynthesis; dimethylallyl diphosphate from isopentenyl diphosphate: step 1/1. Catalyzes the 1,3-allylic rearrangement of the homoallylic substrate isopentenyl (IPP) to its highly electrophilic allylic isomer, dimethylallyl diphosphate (DMAPP). The protein is Isopentenyl-diphosphate Delta-isomerase of Mycolicibacterium vanbaalenii (strain DSM 7251 / JCM 13017 / BCRC 16820 / KCTC 9966 / NRRL B-24157 / PYR-1) (Mycobacterium vanbaalenii).